We begin with the raw amino-acid sequence, 195 residues long: ATP-dependent Clp protease proteolytic subunit (195 aa).

Ser-97 serves as the catalytic Nucleophile. His-122 is an active-site residue.

It belongs to the peptidase S14 family. In terms of assembly, fourteen ClpP subunits assemble into 2 heptameric rings which stack back to back to give a disk-like structure with a central cavity, resembling the structure of eukaryotic proteasomes.

The protein localises to the cytoplasm. It carries out the reaction Hydrolysis of proteins to small peptides in the presence of ATP and magnesium. alpha-casein is the usual test substrate. In the absence of ATP, only oligopeptides shorter than five residues are hydrolyzed (such as succinyl-Leu-Tyr-|-NHMec, and Leu-Tyr-Leu-|-Tyr-Trp, in which cleavage of the -Tyr-|-Leu- and -Tyr-|-Trp bonds also occurs).. Functionally, cleaves peptides in various proteins in a process that requires ATP hydrolysis. Has a chymotrypsin-like activity. Plays a major role in the degradation of misfolded proteins. This Campylobacter hominis (strain ATCC BAA-381 / DSM 21671 / CCUG 45161 / LMG 19568 / NCTC 13146 / CH001A) protein is ATP-dependent Clp protease proteolytic subunit.